A 2033-amino-acid chain; its full sequence is Major viral transcription factor ICP4 homolog (2033 aa).

A compositionally biased stretch (low complexity) spans 1–16 (MFWHQPRQQQLRQLQR). Disordered regions lie at residues 1–47 (MFWH…PPSP), 95–145 (FSDP…LPAP), 157–199 (LSSS…GSSY), 218–240 (PPRS…ADRC), 277–301 (DQSP…CVGE), 313–338 (EERK…ESLP), 350–461 (AEIN…GAVA), 505–527 (SFAQ…ARQR), 719–747 (LPPD…ASRT), 1015–1064 (GKQS…GALN), 1085–1186 (LLSD…PGDP), 1294–1342 (ETWR…EGGT), 1420–1451 (ASPH…RDAA), 1531–1612 (VVFP…PPAA), 1636–1655 (RFDE…GGKP), 1664–1718 (LCEQ…SPSP), and 1746–2033 (EISP…GTER). Positions 157 to 173 (LSSSSPSGSSRGSVTSP) are enriched in low complexity. Residues 223–240 (PDCRRGEPVSEDGMADRC) are compositionally biased toward basic and acidic residues. The span at 313–326 (EERKEAARRSPDAE) shows a compositional bias: basic and acidic residues. Acidic residues predominate over residues 359–368 (ESDEAEDEDA). The segment covering 507-518 (AQRQQPRQQQHA) has biased composition (low complexity). Positions 732-741 (KSRGGRGGGS) are enriched in gly residues. Positions 1031 to 1056 (RATASSPRTPASRPPHGSAAAPPSGR) are enriched in low complexity. The segment covering 1086–1097 (LSDEAGTDDDGD) has biased composition (acidic residues). The span at 1169-1181 (SSSSFASSSLASA) shows a compositional bias: low complexity. Basic and acidic residues predominate over residues 1294–1303 (ETWRDAEDHP). Basic and acidic residues predominate over residues 1575 to 1591 (SHDRSPSSSSRRRDGRP). Residues 1592–1602 (SSRRRPSRRMS) are compositionally biased toward basic residues. Composition is skewed to basic and acidic residues over residues 1752 to 1765 (RRRD…GCRQ) and 1774 to 1795 (EGGR…DSVP). A compositionally biased stretch (low complexity) spans 1812–1843 (SAGRSSSSSSSSSSSSSSSPSSRPSRSATPSL). The span at 1853–1869 (APVDRSRSGRRRERDRP) shows a compositional bias: basic and acidic residues. Polar residues predominate over residues 1912–1921 (TPSSATTLPS). Residues 1927 to 1936 (DSVDETETED) show a composition bias toward acidic residues. Low complexity predominate over residues 1937 to 1948 (SAPPARLAPSPL).

The protein belongs to the herpesviridae ICP4 family. Post-translationally, a long stretch of serine residues may be a major site of phosphorylation.

The protein resides in the host nucleus. This IE protein is a multifunctional protein capable of migrating to the nucleus, binding to DNA, trans-activating other viral genes, and autoregulating its own synthesis. It is required for the switch from immediate-early to early mode of gene expression. This Amazona oratrix (yellow-headed parrot) protein is Major viral transcription factor ICP4 homolog (ICP4B).